The primary structure comprises 398 residues: Pentalenolactone synthase (398 aa).

Position 347 (Cys-347) interacts with heme.

The protein belongs to the cytochrome P450 family. Requires heme as cofactor.

The catalysed reaction is pentalenolactone F + 2 reduced [2Fe-2S]-[ferredoxin] + O2 + 2 H(+) = pentalenolactone + 2 oxidized [2Fe-2S]-[ferredoxin] + 2 H2O. It functions in the pathway antibiotic biosynthesis; pentalenolactone biosynthesis. Catalyzes the final step in the biosynthesis of the sesquiterpenoid antibiotic pentalenolactone by mediating the oxidative rearrangement of pentalenolactone F to pentalenolactone. This chain is Pentalenolactone synthase (penM), found in Streptomyces exfoliatus (Streptomyces hydrogenans).